Here is a 500-residue protein sequence, read N- to C-terminus: Glycerol kinase (500 aa).

An ADP-binding site is contributed by T11. ATP is bound by residues T11, T12, and S13. Position 11 (T11) interacts with sn-glycerol 3-phosphate. An ADP-binding site is contributed by R15. Sn-glycerol 3-phosphate-binding residues include R81, E82, Y133, and D242. Glycerol-binding residues include R81, E82, Y133, D242, and Q243. Positions 264 and 307 each coordinate ADP. Residues T264, G307, Q311, and G411 each coordinate ATP. G411 contributes to the ADP binding site.

Belongs to the FGGY kinase family.

The enzyme catalyses glycerol + ATP = sn-glycerol 3-phosphate + ADP + H(+). It functions in the pathway polyol metabolism; glycerol degradation via glycerol kinase pathway; sn-glycerol 3-phosphate from glycerol: step 1/1. Its activity is regulated as follows. Inhibited by fructose 1,6-bisphosphate (FBP). Key enzyme in the regulation of glycerol uptake and metabolism. Catalyzes the phosphorylation of glycerol to yield sn-glycerol 3-phosphate. The chain is Glycerol kinase from Rhodopseudomonas palustris (strain ATCC BAA-98 / CGA009).